The following is a 277-amino-acid chain: MSCDEKAATSSDEPLRIGGLRLTSRLIMGTGGSTSMDTLERALVASGTQLTTVAMRRFAAGPRQSVFEILQRHRITALPNTAGCYTARDAILTANLAREALDTNLVKLEVIADEDTLLPDPVELVNAAEQLVANDFVVLAYTNDDPAIAKRLEDLGCAAVMPAGAPIGTGLGILNPHNIELIVDRANVPVILDAGIGTASEATLAMELGCDAVLLASAVTRAHNPVGMAQAMKMAVVAGRMARTSGRIPRRRLARASSPFDGIITGRVRGPRENDSL.

Residue lysine 107 is the Schiff-base intermediate with DXP of the active site. Residues glycine 168, 194–195 (AG), and 216–217 (AS) each bind 1-deoxy-D-xylulose 5-phosphate.

It belongs to the ThiG family. In terms of assembly, homotetramer. Forms heterodimers with either ThiH or ThiS.

The protein resides in the cytoplasm. It carries out the reaction [ThiS sulfur-carrier protein]-C-terminal-Gly-aminoethanethioate + 2-iminoacetate + 1-deoxy-D-xylulose 5-phosphate = [ThiS sulfur-carrier protein]-C-terminal Gly-Gly + 2-[(2R,5Z)-2-carboxy-4-methylthiazol-5(2H)-ylidene]ethyl phosphate + 2 H2O + H(+). It participates in cofactor biosynthesis; thiamine diphosphate biosynthesis. In terms of biological role, catalyzes the rearrangement of 1-deoxy-D-xylulose 5-phosphate (DXP) to produce the thiazole phosphate moiety of thiamine. Sulfur is provided by the thiocarboxylate moiety of the carrier protein ThiS. In vitro, sulfur can be provided by H(2)S. In Cutibacterium acnes (strain DSM 16379 / KPA171202) (Propionibacterium acnes), this protein is Thiazole synthase.